The primary structure comprises 379 residues: Protein RecA (379 aa).

The tract at residues 1–23 (MSVDVKSAQSSKSDSLQVEPRPG) is disordered. Over residues 7-16 (SAQSSKSDSL) the composition is skewed to polar residues. 84-91 (GPESSGKT) contributes to the ATP binding site.

The protein belongs to the RecA family.

Its subcellular location is the cytoplasm. Its function is as follows. Can catalyze the hydrolysis of ATP in the presence of single-stranded DNA, the ATP-dependent uptake of single-stranded DNA by duplex DNA, and the ATP-dependent hybridization of homologous single-stranded DNAs. It interacts with LexA causing its activation and leading to its autocatalytic cleavage. This is Protein RecA from Prochlorococcus marinus (strain MIT 9313).